The sequence spans 421 residues: 3-isopropylmalate dehydratase large subunit (421 aa).

Positions 292, 352, and 355 each coordinate [4Fe-4S] cluster.

Belongs to the aconitase/IPM isomerase family. LeuC type 2 subfamily. As to quaternary structure, heterodimer of LeuC and LeuD. [4Fe-4S] cluster serves as cofactor.

The catalysed reaction is (2R,3S)-3-isopropylmalate = (2S)-2-isopropylmalate. It participates in amino-acid biosynthesis; L-leucine biosynthesis; L-leucine from 3-methyl-2-oxobutanoate: step 2/4. Its function is as follows. Catalyzes the isomerization between 2-isopropylmalate and 3-isopropylmalate, via the formation of 2-isopropylmaleate. In Herpetosiphon aurantiacus (strain ATCC 23779 / DSM 785 / 114-95), this protein is 3-isopropylmalate dehydratase large subunit.